The chain runs to 586 residues: Paxillin (586 aa).

Position 1 is an N-acetylmethionine (methionine 1). The short motif at 3–15 (DLDALLADLESTT) is the LD motif 1 element. The interval 13–138 (STTSHISKRP…PSPTVMSSSL (126 aa)) is disordered. A Phosphotyrosine; by PTK6 modification is found at tyrosine 31. Pro residues predominate over residues 45–54 (VPPPVPPPPS). Phosphoserine is present on residues serine 83 and serine 85. Residues 86-98 (PIYSSSTKNSSAS) show a composition bias toward low complexity. Phosphotyrosine is present on tyrosine 88. Position 106 is a phosphoserine (serine 106). At tyrosine 118 the chain carries Phosphotyrosine; by PTK6. Residues serine 119, serine 126, and serine 130 each carry the phosphoserine modification. Residues 121–137 (PNKQKSAEPSPTVMSSS) are compositionally biased toward polar residues. Threonine 132 is subject to Phosphothreonine. 3 positions are modified to phosphoserine: serine 137, serine 140, and serine 143. An LD motif 2 motif is present at residues 144–156 (ELDRLLLELNAVQ). Phosphotyrosine is present on tyrosine 210. The disordered stretch occupies residues 220–241 (GGKAGPLMKEKPKRNGGRGLED). Positions 245–257 (SVESLLDELENSV) match the LD motif 3 motif. Serine 259 carries the phosphoserine modification. The disordered stretch occupies residues 266–290 (VNQGEMSSPQRVTSSQQQTRISASS). Serine 273 is subject to Phosphoserine; by CDK5. Residues serine 279, serine 287, serine 290, serine 301, serine 317, serine 327, and serine 335 each carry the phosphoserine modification. A required for binding to PARVA and ILK region spans residues 291–310 (ATRELDELMASLSDFKFMAQ). The LD motif 4 signature appears at 294–305 (ELDELMASLSDF). The tract at residues 309–329 (AQGKTGSSSPPGGLSKPGSQL) is disordered. Low complexity predominate over residues 310–329 (QGKTGSSSPPGGLSKPGSQL). Residues 328-340 (QLDSMLGSLQSDL) carry the LD motif 5 motif. 3 LIM zinc-binding domains span residues 353–403 (CGAC…CEKD), 412–462 (CYYC…CRKD), and 471–521 (CGGC…CEVH). Phosphoserine is present on serine 528. The LIM zinc-binding 4 domain occupies 530-580 (CSGCQKPITGRCITAMAKKFHPEHFVCAFCLKQLNKGTFKEQNDKPYCQSC).

It belongs to the paxillin family. Interacts in vitro with VCL/vinculin as well as to the SH3 domain of SRC and, when tyrosine phosphorylated, to the SH2 domain of CRK. Interacts with GIT1. Interacts with NUDT16L1/SDOS. Interacts with PTK2/FAK1. Interacts with PTK2B/PYK2. Interacts with ASAP2. Interacts with unphosphorylated ITGA4. Interacts with RNF5. Interacts with PDCD10. Interacts with NEK3, the interaction is prolactin-dependent. Interacts with PTK6. Interacts with TGFB1I1. Interacts with SORBS1. Interacts with PARVB. Interacts (via LD motif 4) with PARVA/PARVIN. Interacts (via LD motif 4) with ILK. Interacts (via cytoplasmic domain) with CEACAM1; the interaction is phosphotyrosyl-dependent. Interacts with LIMA1; this complex stabilizes actin dynamics. Interacts with CD36 (via C-terminus). Interacts with TRIM15. Interacts with PAK4; PAK4 acts as a scaffold to suppport PAXI phosphorylation at Ser-301. In terms of processing, phosphorylated by MAPK1/ERK2. Phosphorylated on tyrosine residues during integrin-mediated cell adhesion, embryonic development, fibroblast transformation and following stimulation of cells by mitogens. Phosphorylation at Ser-273 by CDK5 reduces its interaction with PTK2/FAK1 in matrix-cell focal adhesions (MCFA) during oligodendrocytes (OLs) differentiation. Phosphorylation at Tyr-31 and Tyr-118 by PTK6 promote the activation of RAC1 via CRK/CrKII, thereby promoting migration and invasion. Phosphorylation at Ser-279 by SLK is required for PXN redistribution and cell motility. Phosphorylation at Ser-301 promotes focal adhesion disassembly during cell migration.

The protein resides in the cytoplasm. Its subcellular location is the cytoskeleton. It is found in the cell junction. The protein localises to the focal adhesion. It localises to the cell cortex. Cytoskeletal protein involved in actin-membrane attachment at sites of cell adhesion to the extracellular matrix (focal adhesion). Recruits other proteins such as TRIM15 to focal adhesion. The sequence is that of Paxillin from Rattus norvegicus (Rat).